The following is a 456-amino-acid chain: tRNA modification GTPase MnmE (456 aa).

Residues arginine 21, glutamate 85, and lysine 124 each coordinate (6S)-5-formyl-5,6,7,8-tetrahydrofolate. One can recognise a TrmE-type G domain in the interval 220–379 (QFRIVLYGEP…LLDAIKERTG (160 aa)). Asparagine 230 is a binding site for K(+). GTP-binding positions include 230–235 (NTGKSS), 249–255 (SEIPGTT), and 274–277 (DTAG). Serine 234 contributes to the Mg(2+) binding site. Residues serine 249, isoleucine 251, and threonine 254 each contribute to the K(+) site. Threonine 255 provides a ligand contact to Mg(2+). Residue lysine 456 coordinates (6S)-5-formyl-5,6,7,8-tetrahydrofolate.

Belongs to the TRAFAC class TrmE-Era-EngA-EngB-Septin-like GTPase superfamily. TrmE GTPase family. Homodimer. Heterotetramer of two MnmE and two MnmG subunits. K(+) is required as a cofactor.

The protein resides in the cytoplasm. Exhibits a very high intrinsic GTPase hydrolysis rate. Involved in the addition of a carboxymethylaminomethyl (cmnm) group at the wobble position (U34) of certain tRNAs, forming tRNA-cmnm(5)s(2)U34. The chain is tRNA modification GTPase MnmE from Leptospira interrogans serogroup Icterohaemorrhagiae serovar copenhageni (strain Fiocruz L1-130).